The following is a 310-amino-acid chain: Ribosomal RNA small subunit methyltransferase H (310 aa).

S-adenosyl-L-methionine contacts are provided by residues G33 to H35, D52, F79, D98, and Q105.

Belongs to the methyltransferase superfamily. RsmH family.

The protein resides in the cytoplasm. It catalyses the reaction cytidine(1402) in 16S rRNA + S-adenosyl-L-methionine = N(4)-methylcytidine(1402) in 16S rRNA + S-adenosyl-L-homocysteine + H(+). Specifically methylates the N4 position of cytidine in position 1402 (C1402) of 16S rRNA. The polypeptide is Ribosomal RNA small subunit methyltransferase H (Campylobacter jejuni subsp. jejuni serotype O:23/36 (strain 81-176)).